The primary structure comprises 185 residues: Coiled-coil domain-containing protein 32 (185 aa).

The stretch at 78-98 (LASLEKKLRRIKGLNQEVTSK) forms a coiled coil. A disordered region spans residues 159 to 185 (IPPESQVEKPVAEDEPAAGDKPAAAEQ).

Interacts with AP2S1; the interaction is direct and mediates association with adaptor protein complex 2 (AP-2).

The protein localises to the membrane. The protein resides in the coated pit. Regulates clathrin-mediated endocytsois of cargos such as transferrin probably through the association and modulation of adaptor protein complex 2 (AP-2). Has a role in ciliogenesis. Required for proper cephalic and left/right axis development. This Homo sapiens (Human) protein is Coiled-coil domain-containing protein 32.